Consider the following 273-residue polypeptide: Ribonuclease Z (273 aa).

5 residues coordinate Zn(2+): His61, His63, His146, Asp169, and His233.

It belongs to the RNase Z family. In terms of assembly, homodimer. Requires Zn(2+) as cofactor.

The enzyme catalyses Endonucleolytic cleavage of RNA, removing extra 3' nucleotides from tRNA precursor, generating 3' termini of tRNAs. A 3'-hydroxy group is left at the tRNA terminus and a 5'-phosphoryl group is left at the trailer molecule.. In terms of biological role, zinc phosphodiesterase, which displays some tRNA 3'-processing endonuclease activity. Probably involved in tRNA maturation, by removing a 3'-trailer from precursor tRNA. This Mycobacterium tuberculosis (strain ATCC 25177 / H37Ra) protein is Ribonuclease Z.